We begin with the raw amino-acid sequence, 267 residues long: Pyrroline-5-carboxylate reductase (267 aa).

This sequence belongs to the pyrroline-5-carboxylate reductase family.

The protein localises to the cytoplasm. It catalyses the reaction L-proline + NADP(+) = (S)-1-pyrroline-5-carboxylate + NADPH + 2 H(+). The enzyme catalyses L-proline + NAD(+) = (S)-1-pyrroline-5-carboxylate + NADH + 2 H(+). It functions in the pathway amino-acid biosynthesis; L-proline biosynthesis; L-proline from L-glutamate 5-semialdehyde: step 1/1. Catalyzes the reduction of 1-pyrroline-5-carboxylate (PCA) to L-proline. In Synechocystis sp. (strain ATCC 27184 / PCC 6803 / Kazusa), this protein is Pyrroline-5-carboxylate reductase.